The following is a 151-amino-acid chain: Deoxyuridine 5'-triphosphate nucleotidohydrolase (151 aa).

Residues 70–72 (RSG), asparagine 83, 87–89 (LID), and methionine 97 each bind substrate.

Belongs to the dUTPase family. It depends on Mg(2+) as a cofactor.

It catalyses the reaction dUTP + H2O = dUMP + diphosphate + H(+). It participates in pyrimidine metabolism; dUMP biosynthesis; dUMP from dCTP (dUTP route): step 2/2. This enzyme is involved in nucleotide metabolism: it produces dUMP, the immediate precursor of thymidine nucleotides and it decreases the intracellular concentration of dUTP so that uracil cannot be incorporated into DNA. This chain is Deoxyuridine 5'-triphosphate nucleotidohydrolase, found in Shigella sonnei (strain Ss046).